The chain runs to 435 residues: Serine--tRNA ligase (435 aa).

Thr234 to Glu236 contributes to the L-serine binding site. Residue Arg265–Glu267 coordinates ATP. Glu288 serves as a coordination point for L-serine. Residue Glu352–Ser355 participates in ATP binding. Position 388 (Ser388) interacts with L-serine.

Belongs to the class-II aminoacyl-tRNA synthetase family. Type-1 seryl-tRNA synthetase subfamily. As to quaternary structure, homodimer. The tRNA molecule binds across the dimer.

Its subcellular location is the cytoplasm. The catalysed reaction is tRNA(Ser) + L-serine + ATP = L-seryl-tRNA(Ser) + AMP + diphosphate + H(+). The enzyme catalyses tRNA(Sec) + L-serine + ATP = L-seryl-tRNA(Sec) + AMP + diphosphate + H(+). The protein operates within aminoacyl-tRNA biosynthesis; selenocysteinyl-tRNA(Sec) biosynthesis; L-seryl-tRNA(Sec) from L-serine and tRNA(Sec): step 1/1. Catalyzes the attachment of serine to tRNA(Ser). Is also able to aminoacylate tRNA(Sec) with serine, to form the misacylated tRNA L-seryl-tRNA(Sec), which will be further converted into selenocysteinyl-tRNA(Sec). The protein is Serine--tRNA ligase of Synechococcus sp. (strain JA-2-3B'a(2-13)) (Cyanobacteria bacterium Yellowstone B-Prime).